Reading from the N-terminus, the 480-residue chain is MSRVEGLTSWYSDWQGLSAAILGIGVSGFAAADSLRELGVDVTVYAPEKHTRYNKLLDAIGARYVCAYLDELCEVDVDFIVVSPGISPDNPVIKRLRDRQIPILSEIELAWRVRDKVNTCPWILITGTNGKTTTALLTGSMLAKDGARVAVCGNIGTPVLDAVRNPKGFDYLVVELSSFQLSLLPMHGNGAVKGFSSACVNLDEDHLEWHGAKELYYCAKSRVYHGTTGFCVYNLDDEETKKMVEQACVARNVRAIGFGLCVPDVGQVGIVDGILCDRAFLSARKDSALEITSVEKLEKNKLSMRHIISDVLCAVALARSVETNPLSISRALDEFCLSPHRTEVVAKEMGVMWVNDSKATNPHAVIASLSNFSRVILIFGGLMKGVDVSGIFDRFYETIKAVVVIGKNQSFVGNIKCKKIVCIPDSNDPMSEAVAAADLLATPGDTVLLSPGGSSFDQFESYEHRGNCFINAVKDLVKRK.

127–133 (GTNGKTT) lines the ATP pocket.

This sequence belongs to the MurCDEF family.

The protein localises to the cytoplasm. It catalyses the reaction UDP-N-acetyl-alpha-D-muramoyl-L-alanine + D-glutamate + ATP = UDP-N-acetyl-alpha-D-muramoyl-L-alanyl-D-glutamate + ADP + phosphate + H(+). The protein operates within cell wall biogenesis; peptidoglycan biosynthesis. In terms of biological role, cell wall formation. Catalyzes the addition of glutamate to the nucleotide precursor UDP-N-acetylmuramoyl-L-alanine (UMA). The chain is UDP-N-acetylmuramoylalanine--D-glutamate ligase from Tropheryma whipplei (strain Twist) (Whipple's bacillus).